The following is a 63-amino-acid chain: Kurtoxin-like II (63 aa).

The LCN-type CS-alpha/beta domain maps to 2 to 62; that stretch reads IDGYPVDYWN…ARIKRSGRCR (61 aa). Intrachain disulfides connect Cys-12–Cys-61, Cys-16–Cys-37, Cys-23–Cys-44, and Cys-27–Cys-46.

The protein belongs to the long (4 C-C) scorpion toxin superfamily. Sodium channel inhibitor family. Alpha subfamily. Expressed by the venom gland.

Its subcellular location is the secreted. Its function is as follows. This neurotoxin acts on sodium and calcium channels. Potently inhibits native voltage-gated T-type calcium channel activity in mouse male germ cells. Also binds Cav3.1/CACNA1G, Cav3.2/CACNA1H, and Cav3.3/CACNA1I T-type calcium channels and inhibits the channels by modifying voltage-dependent gating. In addition, binds and significantly inhibits the inactivation of activated sodium channels (Nav1.2/SCN2A and Nav1.5/SCN5A). This chain is Kurtoxin-like II, found in Parabuthus granulatus (Granulated thick-tailed scorpion).